The primary structure comprises 100 residues: Guanine nucleotide exchange factor MSS4 homolog (100 aa).

In terms of domain architecture, MSS4 spans 1–100 (MSNLRIVCQH…YLLLCSLEKN (100 aa)). Zn(2+) is bound by residues C8, C11, C73, and C76.

It belongs to the DSS4/MSS4 family.

Its function is as follows. Guanine-nucleotide-releasing protein that acts on members of the sec4/ypt1/rab subfamily. The chain is Guanine nucleotide exchange factor MSS4 homolog from Schizosaccharomyces pombe (strain 972 / ATCC 24843) (Fission yeast).